The sequence spans 279 residues: Tryptophan synthase alpha chain (279 aa).

Catalysis depends on proton acceptor residues Glu50 and Asp61.

Belongs to the TrpA family. In terms of assembly, tetramer of two alpha and two beta chains.

It catalyses the reaction (1S,2R)-1-C-(indol-3-yl)glycerol 3-phosphate + L-serine = D-glyceraldehyde 3-phosphate + L-tryptophan + H2O. Its pathway is amino-acid biosynthesis; L-tryptophan biosynthesis; L-tryptophan from chorismate: step 5/5. Its function is as follows. The alpha subunit is responsible for the aldol cleavage of indoleglycerol phosphate to indole and glyceraldehyde 3-phosphate. The chain is Tryptophan synthase alpha chain from Brucella anthropi (strain ATCC 49188 / DSM 6882 / CCUG 24695 / JCM 21032 / LMG 3331 / NBRC 15819 / NCTC 12168 / Alc 37) (Ochrobactrum anthropi).